We begin with the raw amino-acid sequence, 157 residues long: Eukaryotic translation initiation factor 5A-1 (157 aa).

Serine 2 is subject to N-acetylserine. The residue at position 2 (serine 2) is a Phosphoserine. Threonine 7 and threonine 10 each carry phosphothreonine. Position 51 is a hypusine (lysine 51). At serine 74 the chain carries Phosphoserine. Lysine 86 participates in a covalent cross-link: Glycyl lysine isopeptide (Lys-Gly) (interchain with G-Cter in ubiquitin).

It belongs to the eIF-5A family. Homodimer. Binds to 80S ribosomes. Actively translating ribosomes show mutually exclusive binding of eIF5a (HYP2 or ANB1) and EFT1/eEF2. Interacts with DYS1 and LIA1. Lys-51 undergoes hypusination, a unique post-translational modification that consists in the addition of a butylamino group from spermidine to lysine side chain, leading to the formation of the unusual amino acid hypusine. eIF-5As are the only known proteins to undergo this modification, which is essential for their function.

Its subcellular location is the cytoplasm. Functionally, translation factor that promotes translation elongation and termination, particularly upon ribosome stalling at specific amino acid sequence contexts. Binds between the exit (E) and peptidyl (P) site of the ribosome and promotes rescue of stalled ribosome: specifically required for efficient translation of polyproline-containing peptides as well as other motifs that stall the ribosome. Acts as a ribosome quality control (RQC) cofactor by joining the RQC complex to facilitate peptidyl transfer during CAT tailing step. Involved in actin dynamics and cell cycle progression, mRNA decay and probably in a pathway involved in stress response and maintenance of cell wall integrity. This Saccharomyces cerevisiae (strain ATCC 204508 / S288c) (Baker's yeast) protein is Eukaryotic translation initiation factor 5A-1 (HYP2).